Consider the following 198-residue polypeptide: Imidazoleglycerol-phosphate dehydratase (198 aa).

It belongs to the imidazoleglycerol-phosphate dehydratase family.

It localises to the cytoplasm. It carries out the reaction D-erythro-1-(imidazol-4-yl)glycerol 3-phosphate = 3-(imidazol-4-yl)-2-oxopropyl phosphate + H2O. It functions in the pathway amino-acid biosynthesis; L-histidine biosynthesis; L-histidine from 5-phospho-alpha-D-ribose 1-diphosphate: step 6/9. This Gluconobacter oxydans (strain 621H) (Gluconobacter suboxydans) protein is Imidazoleglycerol-phosphate dehydratase.